A 662-amino-acid polypeptide reads, in one-letter code: Protein Aster-C (662 aa).

Residues 1–33 (MEGALTARQIVNEGDSSLATELQEEPEESPGPV) are disordered. The region spanning 70–176 (EYRQQFTHLP…LIIFRLWQNV (107 aa)) is the GRAM domain. Positions 212–294 (VEENVQPRSP…EKRISRAPSK (83 aa)) are disordered. The span at 240–250 (VSFTQESVSRA) shows a compositional bias: polar residues. Basic and acidic residues predominate over residues 265 to 276 (LGKEDSQSERNV). A VASt domain is found at 326 to 497 (QGRLYINRVF…DLLMEESVLS (172 aa)). The tract at residues 506–530 (HSSLRRRRRTLNRTAEPVPKLSSQR) is disordered. Positions 507 to 516 (SSLRRRRRTL) are enriched in basic residues. A helical transmembrane segment spans residues 557–577 (LIVVMSIFLLLLVLLNVTLFL).

As to expression, highly expressed in the liver. Also found in the testis.

It is found in the endoplasmic reticulum membrane. Its subcellular location is the cell membrane. Its function is as follows. Cholesterol transporter that mediates non-vesicular transport of cholesterol from the plasma membrane (PM) to the endoplasmic reticulum (ER). Contains unique domains for binding cholesterol and the PM, thereby serving as a molecular bridge for the transfer of cholesterol from the PM to the ER. Plays a crucial role in cholesterol homeostasis and has the unique ability to localize to the PM based on the level of membrane cholesterol. In lipid-poor conditions localizes to the ER membrane and in response to excess cholesterol in the PM is recruited to the endoplasmic reticulum-plasma membrane contact sites (EPCS) which is mediated by the GRAM domain. At the EPCS, the sterol-binding VASt/ASTER domain binds to the cholesterol in the PM and facilitates its transfer from the PM to ER. The sequence is that of Protein Aster-C (Gramd1c) from Mus musculus (Mouse).